A 477-amino-acid chain; its full sequence is Argininosuccinate lyase (477 aa).

The protein belongs to the lyase 1 family. Argininosuccinate lyase subfamily.

The protein localises to the cytoplasm. The catalysed reaction is 2-(N(omega)-L-arginino)succinate = fumarate + L-arginine. The protein operates within amino-acid biosynthesis; L-arginine biosynthesis; L-arginine from L-ornithine and carbamoyl phosphate: step 3/3. In Corynebacterium glutamicum (strain R), this protein is Argininosuccinate lyase.